Reading from the N-terminus, the 45-residue chain is Large ribosomal subunit protein bL34 (45 aa).

Positions 1–45 (MTKRTFGGTSRKRKRVSGFRVRMRSHTGRRVIKSRRKRGRERIAV) are disordered. Over residues 10 to 45 (SRKRKRVSGFRVRMRSHTGRRVIKSRRKRGRERIAV) the composition is skewed to basic residues.

This sequence belongs to the bacterial ribosomal protein bL34 family.

The sequence is that of Large ribosomal subunit protein bL34 from Prochlorococcus marinus subsp. pastoris (strain CCMP1986 / NIES-2087 / MED4).